The following is a 629-amino-acid chain: MTLENKAEASPATKEETTTEAAPAEGEAKTESSEEKGSKEDQGDNASLYVGELDPSVTEAMLFEIFNPIGPVTSVRVCRDAITRRSLGYAYVNFHNQADGIRALEELNYSPIKERPCRIMWSQRDPALRKTGAGNIYIKNLDPAIDNKALHDTFSAFGQILSCKIATDEFGNSRGFGFVHYESAESAESAIQHVNGMLLNDKKVFVGPHVPKSDRMQSFEEQKNSFTNVFIKNLGTEITEAEFEELVNKFGETSSVHLSTNDEGKPTGFGFVDYKEHDVAVKAIDGLSETEFKGNKLFAGRAKKKYERADELRKQYEASRLEKLNKYQGVNLYIKNLDDTIDDDKLRAEFAPHGTITSAKVMVDEAGKSKGFGFVCYSSPEEATKAVTEMNHRLVAGKPLYVVLAQRKDVRRSQLQQQIQAKNQMRLQQQAAAGGLPGQYMGNPGVFYPGQPGFMPPGRGGMPFGANPQMMMRPPMPPQNQFPPRGVPGGPNMYGAPPQGYQQGGFPPQGPMRGGQPPRSGQPGPQGQFRGAPRRKDGESRVADSISNALENAPEEQHKQLVGEALYPKVLAEKAIDGNAEFAGKITGMLLEMPIKEILEVIDDEEGLQAQINDAITAYNEYLNSQKEE.

Residues 1–47 form a disordered region; the sequence is MTLENKAEASPATKEETTTEAAPAEGEAKTESSEEKGSKEDQGDNAS. Over residues 26-42 the composition is skewed to basic and acidic residues; sequence GEAKTESSEEKGSKEDQ. 4 consecutive RRM domains span residues 46–124, 134–211, 227–304, and 330–407; these read ASLY…WSQR, GNIY…PHVP, TNVF…RAKK, and VNLY…LAQR. The disordered stretch occupies residues 465-543; it reads GANPQMMMRP…RRKDGESRVA (79 aa). 2 stretches are compositionally biased toward low complexity: residues 493-506 and 514-531; these read MYGAPPQGYQQGGF and GGQPPRSGQPGPQGQFRG. In terms of domain architecture, PABC spans 542–624; the sequence is VADSISNALE…AITAYNEYLN (83 aa).

It belongs to the polyadenylate-binding protein type-1 family.

The protein resides in the cytoplasm. It localises to the nucleus. Binds the poly(A) tail of mRNA. Appears to be an important mediator of the multiple roles of the poly(A) tail in mRNA biogenesis, stability and translation. In the nucleus, involved in both mRNA cleavage and polyadenylation. Is also required for efficient mRNA export to the cytoplasm. Acts in concert with a poly(A)-specific nuclease (PAN) to affect poly(A) tail shortening, which may occur concomitantly with either nucleocytoplasmic mRNA transport or translational initiation. In the cytoplasm, stimulates translation initiation and regulates mRNA decay through translation termination-coupled poly(A) shortening, probably mediated by PAN. This Yarrowia lipolytica (strain CLIB 122 / E 150) (Yeast) protein is Polyadenylate-binding protein, cytoplasmic and nuclear (PAB1).